Reading from the N-terminus, the 120-residue chain is Crustacean hyperglycemic hormones 1 (120 aa).

Residues 1–24 form the signal peptide; sequence MIAFRAVWSALLASLLLLLLAPSA. Intrachain disulfides connect C53-C89, C69-C85, and C72-C98. Position 118 is a valine amide (V118).

Belongs to the arthropod CHH/MIH/GIH/VIH hormone family. As to expression, produced by the medulla terminalis X-organ in the eyestalks and transported to the sinus gland where they are stored and released.

It is found in the secreted. Hormone found in the sinus gland of isopods and decapods which controls the blood sugar level. Has a secretagogue action over the amylase released from the midgut gland. May act as a stress hormone and may be involved in the control of molting and reproduction. The sequence is that of Crustacean hyperglycemic hormones 1 from Penaeus japonicus (Kuruma prawn).